The sequence spans 309 residues: Type II methyltransferase M.HindIII (309 aa).

This sequence belongs to the N(4)/N(6)-methyltransferase family.

The enzyme catalyses a 2'-deoxyadenosine in DNA + S-adenosyl-L-methionine = an N(6)-methyl-2'-deoxyadenosine in DNA + S-adenosyl-L-homocysteine + H(+). Functionally, a beta subtype methylase that recognizes the double-stranded sequence 5'-AAGCTT-3', methylates A-1 on both strands, and protects the DNA from cleavage by the HindIII endonuclease. The protein is Type II methyltransferase M.HindIII of Haemophilus influenzae (strain ATCC 51907 / DSM 11121 / KW20 / Rd).